Consider the following 193-residue polypeptide: MTEYLLLLIGTVLVNNFVLVKFLGLCPFMGVSKKLESAIGMGLATTFVLTLASVCSYLIETYILAPLGIEYLRTMSFILVIAVVVQFTEMVVHKTSPTLYRVLGIFLPLITTNCAVLGVALLNVTENHNFIESIIYGFGAAVGFSLVLILFSAMRERIAAADVPLPFKGASIAMITAGLMSLAFMGFTGLVKL.

A run of 6 helical transmembrane segments spans residues 5 to 25, 39 to 59, 63 to 83, 102 to 122, 134 to 154, and 171 to 191; these read LLLLIGTVLVNNFVLVKFLGL, IGMGLATTFVLTLASVCSYLI, ILAPLGIEYLRTMSFILVIAV, VLGIFLPLITTNCAVLGVALL, IIYGFGAAVGFSLVLILFSAM, and SIAMITAGLMSLAFMGFTGLV.

This sequence belongs to the NqrDE/RnfAE family. As to quaternary structure, the complex is composed of six subunits: RnfA, RnfB, RnfC, RnfD, RnfE and RnfG.

It localises to the cell inner membrane. Functionally, part of a membrane-bound complex that couples electron transfer with translocation of ions across the membrane. The protein is Ion-translocating oxidoreductase complex subunit A of Aliivibrio salmonicida (strain LFI1238) (Vibrio salmonicida (strain LFI1238)).